The following is a 689-amino-acid chain: DNA topoisomerase 1 (689 aa).

In terms of domain architecture, Toprim spans 3–113 (DNLVIVESPA…KENRVVFNEI (111 aa)). 2 residues coordinate Mg(2+): glutamate 9 and aspartate 82. The 429-residue stretch at 129–557 (EMNLVDAQQA…FFSSFKQDVE (429 aa)) folds into the Topo IA-type catalytic domain. An interaction with DNA region spans residues 163–168 (SAGRVQ). Tyrosine 298 functions as the O-(5'-phospho-DNA)-tyrosine intermediate in the catalytic mechanism. The segment at 328–357 (SKRKASGKQGDQDAHEAIRPSSTMRTPDDM) is disordered. C4-type zinc fingers lie at residues 577 to 603 (CEVC…FPDC), 617 to 645 (CPKC…YPEC), and 658 to 681 (CPKC…CSNC).

Belongs to the type IA topoisomerase family. Monomer. Requires Mg(2+) as cofactor.

The catalysed reaction is ATP-independent breakage of single-stranded DNA, followed by passage and rejoining.. Its function is as follows. Releases the supercoiling and torsional tension of DNA, which is introduced during the DNA replication and transcription, by transiently cleaving and rejoining one strand of the DNA duplex. Introduces a single-strand break via transesterification at a target site in duplex DNA. The scissile phosphodiester is attacked by the catalytic tyrosine of the enzyme, resulting in the formation of a DNA-(5'-phosphotyrosyl)-enzyme intermediate and the expulsion of a 3'-OH DNA strand. The free DNA strand then undergoes passage around the unbroken strand, thus removing DNA supercoils. Finally, in the religation step, the DNA 3'-OH attacks the covalent intermediate to expel the active-site tyrosine and restore the DNA phosphodiester backbone. This Staphylococcus aureus protein is DNA topoisomerase 1.